A 258-amino-acid polypeptide reads, in one-letter code: Transcriptional repressor AccR (258 aa).

The HTH deoR-type domain occupies 6-61 (TQDRQAKIVELLRDEQFLAIGRLTEHFQISVATARRDLSELHEAGLLRRTHGGAVS). The H-T-H motif DNA-binding region spans 23 to 42 (LAIGRLTEHFQISVATARRD).

In terms of biological role, represses opine catabolism and conjugal transfer of the nopaline Ti plasmid pTiC58. The chain is Transcriptional repressor AccR (accR) from Agrobacterium fabrum (strain C58 / ATCC 33970) (Agrobacterium tumefaciens (strain C58)).